The primary structure comprises 299 residues: Tricarboxylate transport protein (299 aa).

Solcar repeat units lie at residues 10–97, 109–199, and 212–297; these read VDPL…IKDM, TRGV…IKTL, and LSSG…VLVM. The next 6 membrane-spanning stretches (helical) occupy residues 16–36, 66–86, 113–133, 174–193, 215–235, and 272–291; these read FLAG…FEFA, IGSI…KAGI, IAGL…FEAI, GVLP…LGCY, GLTF…TMPL, and GATP…FTIY.

This sequence belongs to the mitochondrial carrier (TC 2.A.29) family.

The protein localises to the mitochondrion inner membrane. Transport of citrate across inner mitochondrial membrane. The chain is Tricarboxylate transport protein (CTP1) from Saccharomyces cerevisiae (strain ATCC 204508 / S288c) (Baker's yeast).